The following is a 306-amino-acid chain: Protein SEC13 homolog (306 aa).

WD repeat units lie at residues Q11 to P50, G56 to T97, T102 to Q143, C150 to T195, C202 to W245, and Q252 to K291.

The protein belongs to the WD repeat SEC13 family. In terms of assembly, probably part of the GATOR complex.

Its subcellular location is the cytoplasmic vesicle. It is found in the COPII-coated vesicle membrane. The protein localises to the endoplasmic reticulum membrane. The protein resides in the nucleus. It localises to the nuclear pore complex. Its subcellular location is the lysosome membrane. Functionally, functions as a component of the nuclear pore complex (NPC) and the COPII coat. As a component of the GATOR complex may function in the amino acid-sensing branch of the TORC1 signaling pathway. The chain is Protein SEC13 homolog from Caenorhabditis briggsae.